The following is a 146-amino-acid chain: Hemoglobin subunit beta (146 aa).

Position 1 is an N-acetylvaline (Val-1). Residues 2-146 enclose the Globin domain; it reads HLTNEEKTAV…VATALAHKYH (145 aa). Ser-44 bears the Phosphoserine mark. Lys-59 carries the N6-acetyllysine modification. Position 63 (His-63) interacts with heme b. Lys-82 is modified (N6-acetyllysine). Position 92 (His-92) interacts with heme b. Cys-93 carries the post-translational modification S-nitrosocysteine. Lys-144 is modified (N6-acetyllysine).

The protein belongs to the globin family. Heterotetramer of two alpha chains and two beta chains. In terms of tissue distribution, red blood cells.

Functionally, involved in oxygen transport from the lung to the various peripheral tissues. In Lyroderma lyra (Greater Asian false-vampire bat), this protein is Hemoglobin subunit beta (HBB).